The following is a 380-amino-acid chain: Ceramide synthase 2 (380 aa).

Topologically, residues 1–40 (MLQTLHDYFWWERLWLPVNLTWADLEDRDGRVYAKASDLY) are lumenal. N-linked (GlcNAc...) asparagine glycosylation occurs at Asn-19. A helical membrane pass occupies residues 41 to 61 (ITLPLALLFLIIRYFFELYVA). The segment at 67 to 128 (LLNVKEKTRL…RRRRNQDRPS (62 aa)) is homeobox-like. In terms of domain architecture, TLC spans 131–332 (KKFREASWRF…ILRMAHKFIT (202 aa)). Helical transmembrane passes span 140–160 (FTFYLIAFIAGTAVIVDKPWF), 181–201 (WYYMIELSFYWSLLFSIASDV), 209–229 (QIIHHVATIILISFSWFANYV), and 264–284 (IFIVFAIVFIITRLVILPFWI). The short motif at 291-300 (YPLELYPAFF) is the Last loop motif element. A helical transmembrane segment spans residues 304-324 (FFNFMMGVLQLLHIFWAYLIL). The Cytoplasmic segment spans residues 325 to 380 (RMAHKFITGKVVEDERSDREETESSEGEEAAAGGGAKNRPLANGHPILNNNHRKND). The tract at residues 338–380 (DERSDREETESSEGEEAAAGGGAKNRPLANGHPILNNNHRKND) is disordered. Ser-341 bears the Phosphoserine mark. Residues 344-353 (EETESSEGEE) are compositionally biased toward acidic residues. The residue at position 346 (Thr-346) is a Phosphothreonine. Phosphoserine is present on residues Ser-348 and Ser-349.

In terms of assembly, interacts with ATP6V0C, ASGR1, ASGR2 and SLC22A1/OCT1. Interacts with ELOV1, HSD17B12 and TECR. Interacts with NDUFS2. Post-translationally, acetylated. Deacetylation by SIRT3 increases enzyme activity and promotes mitochondrial ceramide accumulation. Phosphorylated at the C-terminus by CK2, leading to increase the ceramide synthase activity.

Its subcellular location is the endoplasmic reticulum membrane. It carries out the reaction a very long-chain fatty acyl-CoA + a sphingoid base = an N-(very-long-chain fatty acyl)-sphingoid base + CoA + H(+). The enzyme catalyses docosanoyl-CoA + sphinganine = N-docosanoylsphinganine + CoA + H(+). It catalyses the reaction tetracosanoyl-CoA + sphinganine = N-tetracosanoylsphinganine + CoA + H(+). The catalysed reaction is hexacosanoyl-CoA + sphinganine = N-hexacosanoylsphinganine + CoA + H(+). It carries out the reaction (15Z)-tetracosenoyl-CoA + sphinganine = N-(15Z-tetracosenoyl)-sphinganine + CoA + H(+). The enzyme catalyses 2-hydroxytetracosanoyl-CoA + sphinganine = N-(2-hydroxytetracosanoyl)-sphinganine + CoA + H(+). It catalyses the reaction 2-hydroxydocosanoyl-CoA + sphinganine = N-(2-hydroxydocosanoyl)-sphinganine + CoA + H(+). The catalysed reaction is 2-hydroxytetracosenoyl-CoA + sphinganine = N-(2-hydroxytetracosenoyl)-sphinganine + CoA + H(+). It carries out the reaction tetracosenoyl-CoA + sphinganine = an N-tetracosenoylsphinganine + CoA + H(+). The enzyme catalyses hexacosenoyl-CoA + sphinganine = N-hexacosenoylsphinganine + CoA + H(+). It catalyses the reaction tetracosanoyl-CoA + sphing-4-enine = N-tetracosanoyl-sphing-4-enine + CoA + H(+). The catalysed reaction is tetracosenoyl-CoA + sphing-4-enine = N-(tetracosenoyl)-sphing-4-enine + CoA + H(+). It carries out the reaction heptadecasphing-4-enine + tetracosanoyl-CoA = N-tetracosanoyl-heptadecasphing-4-enine + CoA + H(+). The enzyme catalyses a fatty acyl-CoA + sphing-4-enine = an N-acylsphing-4-enine + CoA + H(+). It catalyses the reaction sphing-4-enine + hexadecanoyl-CoA = N-hexadecanoylsphing-4-enine + CoA + H(+). The catalysed reaction is sphing-4-enine + octadecanoyl-CoA = N-octadecanoylsphing-4-enine + CoA + H(+). It carries out the reaction eicosanoyl-CoA + sphing-4-enine = N-eicosanoyl-sphing-4-enine + CoA + H(+). The enzyme catalyses sphinganine + hexadecanoyl-CoA = N-hexadecanoylsphinganine + CoA + H(+). It catalyses the reaction sphinganine + octadecanoyl-CoA = N-(octadecanoyl)-sphinganine + CoA + H(+). The catalysed reaction is sphinganine + (9Z)-octadecenoyl-CoA = N-(9Z-octadecenoyl)-sphinganine + CoA + H(+). It carries out the reaction eicosanoyl-CoA + sphinganine = N-eicosanoylsphinganine + CoA + H(+). Its pathway is lipid metabolism; sphingolipid metabolism. Its activity is regulated as follows. Ceramide synthase activity is inhibited by sphingosine-1-phosphate. Its function is as follows. Ceramide synthase that catalyzes the transfer of the acyl chain from acyl-CoA to a sphingoid base, with high selectivity toward very-long-chain fatty acyl-CoA (chain length C22-C27). N-acylates sphinganine and sphingosine bases to form dihydroceramides and ceramides in de novo synthesis and salvage pathways, respectively. Plays a non-redundant role in the synthesis of ceramides with very-long-chain fatty acids in kidney, liver and brain. Regulates the abundance of myelin-specific sphingolipids galactosylceramide and sulfatide that affects myelin sheath architecture and motor neuron functions. This Bos taurus (Bovine) protein is Ceramide synthase 2.